A 36-amino-acid chain; its full sequence is Pancreatic polypeptide (36 aa).

Phe-36 carries the post-translational modification Phenylalanine amide.

It belongs to the NPY family.

The protein localises to the secreted. Functionally, hormone secreted by pancreatic cells that acts as a regulator of pancreatic and gastrointestinal functions. The polypeptide is Pancreatic polypeptide (ppy) (Rana temporaria (European common frog)).